A 219-amino-acid chain; its full sequence is Large ribosomal subunit protein uL3 (219 aa).

Gln151 carries the post-translational modification N5-methylglutamine.

This sequence belongs to the universal ribosomal protein uL3 family. Part of the 50S ribosomal subunit. Forms a cluster with proteins L14 and L19. In terms of processing, methylated by PrmB.

One of the primary rRNA binding proteins, it binds directly near the 3'-end of the 23S rRNA, where it nucleates assembly of the 50S subunit. This chain is Large ribosomal subunit protein uL3, found in Blochmanniella floridana.